We begin with the raw amino-acid sequence, 818 residues long: Fibrous sheath CABYR-binding protein (818 aa).

The interval 1–61 (MEEKDESEQS…PKAALSIGNI (61 aa)) is disordered. Phosphoserine occurs at positions 25, 57, and 182. 2 disordered regions span residues 195-727 (SFSK…PFIT) and 773-805 (LESG…NEGV). 3 stretches are compositionally biased toward low complexity: residues 490–511 (SPPA…PAEE), 544–560 (EAPA…PAEE), and 697–715 (AELQ…VSVE). A compositionally biased stretch (basic and acidic residues) spans 773–794 (LESGNLDDKPKSEEPLERDTIP).

Interacts with CABYR. Interacts with ROPN1 and ROPN1L; the interaction increases upon spermatozoa capacitation conditions. Post-translationally, phosphorylated by PKA upon spermatozoa capacitation conditions.

The protein localises to the cell projection. It is found in the cilium. The protein resides in the flagellum. Functionally, may be involved in the later stages of fibrous sheath biogenesis and spermatozoa capacitation. Inhibits ROPN1 and ROPN1L SUMOylation. Binds calcium. This is Fibrous sheath CABYR-binding protein from Bos taurus (Bovine).